The following is an 800-amino-acid chain: N,N'-diacetylchitobiose phosphorylase (800 aa).

The N-acetyl-alpha-D-glucosamine 1-phosphate site is built by R333, R343, R349, D350, W490, and D492. D492 serves as the catalytic Proton donor. N-acetyl-D-glucosamine contacts are provided by D492, K636, and E637. N-acetyl-alpha-D-glucosamine 1-phosphate-binding residues include E637, H644, Q690, T709, and G710.

Belongs to the glycosyl hydrolase 94 family. Homodimer.

It carries out the reaction N,N'-diacetylchitobiose + phosphate = N-acetyl-alpha-D-glucosamine 1-phosphate + N-acetyl-D-glucosamine. Its function is as follows. Catalyzes the reversible phosphorolysis of chitobiose (N,N'-diacetylchitobiose or (GlcNAc)(2)) into N-acetyl-alpha-D-glucosamine 1-phosphate (GlcNAc-1-P) and N-acetyl-D-glucosamine (GlcNAc) with inversion of the anomeric configuration. The protein is N,N'-diacetylchitobiose phosphorylase of Vibrio furnissii.